A 475-amino-acid chain; its full sequence is C3a anaphylatoxin chemotactic receptor (475 aa).

Residues 1–23 (MESSSAETNSTGLHLEPQYQPET) lie on the Extracellular side of the membrane. The N-linked (GlcNAc...) asparagine glycan is linked to N9. A helical membrane pass occupies residues 24–46 (ILAMAILGLTFVLGLPGNGLVLW). At 47 to 57 (VAGLKMRRTVN) the chain is on the cytoplasmic side. Residues 58-80 (TVWFLHLTVADFVCCLSLPFSMA) form a helical membrane-spanning segment. Over 81–96 (HLALRGYWPYGEILCK) the chain is Extracellular. A disulfide bridge connects residues C95 and C172. Residues 97–118 (FIPTVIIFNMFASVFLLTAISL) form a helical membrane-spanning segment. The Cytoplasmic segment spans residues 119–139 (DRCLMVLKPIWCQNHRNVRTA). The helical transmembrane segment at 140-160 (CIICGCIWLVAFVLCIPVFVY) threads the bilayer. Over 161–331 (RETFTLENHT…RLLKVITFTR (171 aa)) the chain is Extracellular. N-linked (GlcNAc...) asparagine glycosylation occurs at N168. Residues Y174 and Y183 each carry the sulfotyrosine modification. 2 N-linked (GlcNAc...) asparagine glycosylation sites follow: N273 and N292. The chain crosses the membrane as a helical span at residues 332 to 351 (LVVGFLLPMIIMVACYTLII). Residues 352–368 (FRMRRVRVVKSWNKALH) lie on the Cytoplasmic side of the membrane. Residues 369–391 (LAMVVVTIFLICWAPYHVFGVLI) form a helical membrane-spanning segment. Residues 392-408 (LFINPESRVGAALLSWD) lie on the Extracellular side of the membrane. The helical transmembrane segment at 409–429 (HVSIALASANSCFNPFLYALL) threads the bilayer. Over 430–475 (GRDLRKRVRQSMKGILEAAFSEDISKSTSFIQAKAFSEKHSLSTNV) the chain is Cytoplasmic. The residue at position 450 (S450) is a Phosphoserine.

It belongs to the G-protein coupled receptor 1 family. As to quaternary structure, interacts with VGF-derived peptide TLQP-21. As to expression, expressed in the heart, kidney, lung, liver, peritoneal macrophages and spleen.

Its subcellular location is the cell membrane. Receptor for the chemotactic and inflammatory peptide anaphylatoxin C3a. This receptor stimulates chemotaxis, granule enzyme release and superoxide anion production. In Cavia porcellus (Guinea pig), this protein is C3a anaphylatoxin chemotactic receptor (C3AR1).